The primary structure comprises 329 residues: Phenylalanine--tRNA ligase alpha subunit (329 aa).

E254 contributes to the Mg(2+) binding site.

Belongs to the class-II aminoacyl-tRNA synthetase family. Phe-tRNA synthetase alpha subunit type 1 subfamily. As to quaternary structure, tetramer of two alpha and two beta subunits. Mg(2+) is required as a cofactor.

The protein resides in the cytoplasm. It carries out the reaction tRNA(Phe) + L-phenylalanine + ATP = L-phenylalanyl-tRNA(Phe) + AMP + diphosphate + H(+). In Histophilus somni (strain 2336) (Haemophilus somnus), this protein is Phenylalanine--tRNA ligase alpha subunit.